A 378-amino-acid polypeptide reads, in one-letter code: Chaperone protein DnaJ (378 aa).

The region spanning 5–70 (DYYEVLGVAK…QKRAAYDQYG (66 aa)) is the J domain. Residues 138 to 216 (GYDTQIRVPS…CHGSGKVKET (79 aa)) form a CR-type zinc finger. 8 residues coordinate Zn(2+): Cys-151, Cys-154, Cys-168, Cys-171, Cys-190, Cys-193, Cys-204, and Cys-207. 4 CXXCXGXG motif repeats span residues 151 to 158 (CEVCHGSG), 168 to 175 (CPTCHGQG), 190 to 197 (CPKCHGTG), and 204 to 211 (CAHCHGSG).

Belongs to the DnaJ family. Homodimer. Zn(2+) is required as a cofactor.

The protein resides in the cytoplasm. Its function is as follows. Participates actively in the response to hyperosmotic and heat shock by preventing the aggregation of stress-denatured proteins and by disaggregating proteins, also in an autonomous, DnaK-independent fashion. Unfolded proteins bind initially to DnaJ; upon interaction with the DnaJ-bound protein, DnaK hydrolyzes its bound ATP, resulting in the formation of a stable complex. GrpE releases ADP from DnaK; ATP binding to DnaK triggers the release of the substrate protein, thus completing the reaction cycle. Several rounds of ATP-dependent interactions between DnaJ, DnaK and GrpE are required for fully efficient folding. Also involved, together with DnaK and GrpE, in the DNA replication of plasmids through activation of initiation proteins. This is Chaperone protein DnaJ from Burkholderia vietnamiensis (strain G4 / LMG 22486) (Burkholderia cepacia (strain R1808)).